The chain runs to 190 residues: Nucleoside triphosphate pyrophosphatase (190 aa).

The Proton acceptor role is filled by D69.

The protein belongs to the Maf family. Requires a divalent metal cation as cofactor.

Its subcellular location is the cytoplasm. It catalyses the reaction a ribonucleoside 5'-triphosphate + H2O = a ribonucleoside 5'-phosphate + diphosphate + H(+). The enzyme catalyses a 2'-deoxyribonucleoside 5'-triphosphate + H2O = a 2'-deoxyribonucleoside 5'-phosphate + diphosphate + H(+). Its function is as follows. Nucleoside triphosphate pyrophosphatase. May have a dual role in cell division arrest and in preventing the incorporation of modified nucleotides into cellular nucleic acids. This Helicobacter pylori (strain G27) protein is Nucleoside triphosphate pyrophosphatase.